We begin with the raw amino-acid sequence, 164 residues long: UPF0303 protein RHE_CH02903 (164 aa).

It belongs to the UPF0303 family.

The polypeptide is UPF0303 protein RHE_CH02903 (Rhizobium etli (strain ATCC 51251 / DSM 11541 / JCM 21823 / NBRC 15573 / CFN 42)).